A 192-amino-acid chain; its full sequence is Leucine-rich repeat-containing protein 51 (192 aa).

LRR repeat units lie at residues 49–71 (SLTQ…NQVA), 80–101 (NLAW…LTTF), and 103–124 (NLSV…NKLA). In terms of domain architecture, LRRCT spans 137–175 (NPMEEEKGYRQYVLCTLPHITTFDFSGVTKADRTTAEVW).

The protein localises to the cytoplasm. The sequence is that of Leucine-rich repeat-containing protein 51 from Macaca mulatta (Rhesus macaque).